The following is a 554-amino-acid chain: Protein NODULATION SIGNALING PATHWAY 1 (554 aa).

Residues 76–165 (TTSTTSLEPN…NSNNGNNKDG (90 aa)) are disordered. Over residues 82–91 (LEPNSFNNIP) the composition is skewed to polar residues. Basic and acidic residues predominate over residues 95–107 (LPKKRNAEDELSL). Over residues 150–162 (AKANGSNSNNGNN) the composition is skewed to low complexity. A GRAS domain is found at 159–548 (NGNNKDGRWA…QPVSFCSLWK (390 aa)). The leucine repeat I (LRI) stretch occupies residues 166–227 (RWAEQLLNPC…HHLSSSSSST (62 aa)). The segment at 246 to 315 (LLKFYEFSPW…GGPPPLVRLT (70 aa)) is VHIID. Residues 281 to 285 (LHILD) carry the VHIID motif. Positions 331–373 (TPFSIGPCGDTFSSGLLGYAQSLNVNLQIKKLDNHPLQTLNAK) are leucine repeat II (LRII). A PFYRE region spans residues 383–468 (LIVCAQFRLH…RDSDERKMME (86 aa)). Residues 471 to 548 (AAKALTNQRE…QPVSFCSLWK (78 aa)) form an SAW region.

This sequence belongs to the GRAS family. Expressed in epidermal and cortical root cells.

It localises to the nucleus. In terms of biological role, transcriptional regulator essential for Nod-factor-induced gene expression. Acts downstream of calcium spiking. May be a target of DMI3, a calcium/calmodulin-dependent protein kinase (CCaMK). Is essential for Nod factor-elicited expression of ERN1. Transcription factor involved in the control of strigolactone biosynthesis in roots through the activation of the beta-carotene isomerase D27, which participates in a pathway leading to biosynthesis of strigolactones. This is Protein NODULATION SIGNALING PATHWAY 1 from Medicago truncatula (Barrel medic).